Here is a 203-residue protein sequence, read N- to C-terminus: Formate hydrogenlyase subunit 2 (203 aa).

4 consecutive 4Fe-4S ferredoxin-type domains span residues N2–Q32, N42–D72, G73–S102, and R137–N169. [4Fe-4S] cluster-binding residues include C12, C15, C18, C22, C51, C54, C59, C63, C82, C85, C88, C92, C143, C146, C155, and C159.

In terms of assembly, FHL comprises of a formate dehydrogenase, unidentified electron carriers and a hydrogenase (isoenzyme 3). In this non-energy conserving pathway, molecular hydrogen and carbodioxide are released from formate. The cofactor is [4Fe-4S] cluster.

Probable electron transfer protein for hydrogenase 3. In Escherichia coli (strain K12), this protein is Formate hydrogenlyase subunit 2 (hycB).